The chain runs to 120 residues: uncharacterized protein (120 aa).

The region spanning 3 to 120 (IRYKKAFEKI…EKCEICHGSE (118 aa)) is the N-acetyltransferase domain.

This is an uncharacterized protein from Bacillus methanolicus.